Consider the following 896-residue polypeptide: Protein translocase subunit SecA (896 aa).

ATP contacts are provided by residues Gln-87, 105 to 109, and Asp-507; that span reads GEGKT. Residues 853-879 form a disordered region; sequence ESLSENDEASETQTFRRQEKKIGRNDP. The span at 866–876 shows a compositional bias: basic and acidic residues; the sequence is TFRRQEKKIGR. Positions 880, 882, 891, and 892 each coordinate Zn(2+).

Belongs to the SecA family. Monomer and homodimer. Part of the essential Sec protein translocation apparatus which comprises SecA, SecYEG and auxiliary proteins SecDF-YajC and YidC. It depends on Zn(2+) as a cofactor.

The protein localises to the cell inner membrane. It is found in the cytoplasm. It catalyses the reaction ATP + H2O + cellular proteinSide 1 = ADP + phosphate + cellular proteinSide 2.. Functionally, part of the Sec protein translocase complex. Interacts with the SecYEG preprotein conducting channel. Has a central role in coupling the hydrolysis of ATP to the transfer of proteins into and across the cell membrane, serving both as a receptor for the preprotein-SecB complex and as an ATP-driven molecular motor driving the stepwise translocation of polypeptide chains across the membrane. This chain is Protein translocase subunit SecA, found in Legionella pneumophila (strain Corby).